The chain runs to 101 residues: MAKQSMKAREVKRIKLAKKFYSRREHLKSIISDLSVLEQDRWKAVLKLQTFPRDSSPIRQRNRCSQTGRPHAFLRKFGLSRIKVREAAMRGEIPGLKKSSW.

This sequence belongs to the universal ribosomal protein uS14 family. As to quaternary structure, part of the 30S ribosomal subunit. Contacts proteins S3 and S10.

In terms of biological role, binds 16S rRNA, required for the assembly of 30S particles and may also be responsible for determining the conformation of the 16S rRNA at the A site. The polypeptide is Small ribosomal subunit protein uS14 (Buchnera aphidicola subsp. Baizongia pistaciae (strain Bp)).